Consider the following 405-residue polypeptide: Eukaryotic translation initiation factor 5 (405 aa).

Position 27-34 (27-34) interacts with GTP; the sequence is GRGNGIKT. The segment at 143–202 is disordered; sequence NPPDSVSGSKKKKKAATASANVRGGGLSISDIAQGKSQNAPSDGTGSSTPQHHDEDEDEL. 2 positions are modified to phosphoserine: Ser170 and Ser172. Over residues 177 to 192 the composition is skewed to polar residues; it reads GKSQNAPSDGTGSSTP. Thr191 carries the post-translational modification Phosphothreonine. Ser228 bears the Phosphoserine mark. Positions 241–402 constitute a W2 domain; the sequence is VNSELTQLDE…ETAESDDDEE (162 aa). Residue Thr317 is modified to Phosphothreonine. Ser397 carries the phosphoserine modification.

It belongs to the eIF-2-beta/eIF-5 family. As to quaternary structure, monomer. The factors eIF-1, eIF-2, eIF-3, TIF5/eIF-5 and methionyl-tRNAi form a multifactor complex (MFC) that may bind to the 40S ribosome. TIF32, NIP1 and TIF5/eIF-5 comprise a minimal 40S-ribosome-binding unit. Interacts with NIP1. Interacts with SUI3.

Catalyzes the hydrolysis of GTP bound to the 40S ribosomal initiation complex (40S.mRNA.Met-tRNA[F].eIF-2.GTP) with the subsequent joining of a 60S ribosomal subunit resulting in the release of eIF-2 and the guanine nucleotide. The subsequent joining of a 60S ribosomal subunit results in the formation of a functional 80S initiation complex (80S.mRNA.Met-tRNA[F]). eIF-5 is essential for cell viability. The chain is Eukaryotic translation initiation factor 5 (TIF5) from Saccharomyces cerevisiae (strain ATCC 204508 / S288c) (Baker's yeast).